A 427-amino-acid chain; its full sequence is 11-beta-hydroxysteroid dehydrogenase type 2 (427 aa).

Residue Thr-82 to Ala-111 coordinates NAD(+). Ser-219 contributes to the substrate binding site. Catalysis depends on Tyr-232, which acts as the Proton acceptor.

Belongs to the short-chain dehydrogenases/reductases (SDR) family. Interacts with ligand-free cytoplasmic NR3C2. As to expression, highly expressed in the kidney and adrenal and at lower levels in the colon.

It is found in the microsome. The protein resides in the endoplasmic reticulum. The catalysed reaction is an 11beta-hydroxysteroid + NAD(+) = an 11-oxosteroid + NADH + H(+). The enzyme catalyses corticosterone + NAD(+) = 11-dehydrocorticosterone + NADH + H(+). It catalyses the reaction cortisol + NAD(+) = cortisone + NADH + H(+). It carries out the reaction 11beta,17beta-dihydroxyandrost-4-ene-3-one + NAD(+) = 17beta-hydroxyandrost-4-ene-3,11-dione + NADH + H(+). The catalysed reaction is 11beta-hydroxyandrost-4-ene-3,17-dione + NAD(+) = androst-4-ene-3,11,17-trione + NADH + H(+). It functions in the pathway steroid metabolism. With respect to regulation, inhibited by glycyrrhetinic acid, carbenoloxone, 11-alpha-OH-progesterone and 11-beta-OH-progesterone. Its function is as follows. Catalyzes the conversion of biologically active 11beta-hydroxyglucocorticoids (11beta-hydroxysteroid) such as cortisol, to inactive 11-ketoglucocorticoids (11-oxosteroid) such as cortisone, in the presence of NAD(+). Functions as a dehydrogenase (oxidase), thereby decreasing the concentration of active glucocorticoids, thus protecting the nonselective mineralocorticoid receptor from occupation by glucocorticoids. Plays an important role in maintaining glucocorticoids balance during preimplantation and protects the fetus from excessive maternal corticosterone exposure. Catalyzes the oxidation of 11beta-hydroxytestosterone (11beta,17beta-dihydroxyandrost-4-ene-3-one) to 11-ketotestosterone (17beta-hydroxyandrost-4-ene-3,11-dione), a major bioactive androgen. Catalyzes the conversion of 11beta-hydroxyandrostenedione (11beta-hydroxyandrost-4-ene-3,17-dione) to 11-ketoandrostenedione (androst-4-ene-3,11,17-trione), which can be further metabolized to 11-ketotestosterone. Converts 7-beta-25-dihydroxycholesterol to 7-oxo-25-hydroxycholesterol in vitro. 7-beta-25-dihydroxycholesterol (not 7-oxo-25-hydroxycholesterol) acts as a ligand for the G-protein-coupled receptor (GPCR) Epstein-Barr virus-induced gene 2 (EBI2) and may thereby regulate immune cell migration. May protect ovulating oocytes and fertilizing spermatozoa from the adverse effects of cortisol. The polypeptide is 11-beta-hydroxysteroid dehydrogenase type 2 (HSD11B2) (Ovis aries (Sheep)).